Consider the following 337-residue polypeptide: MRLTASAIAEQFGLTVVGDGTTEVSGVATLAHAGAGQLSFLSNPRYRPQLADTQAAVVVLRADDAEAAKGTALVAKDPYTAFAKIAALFDLAPVREPGIHASAVIDPTAQVSATAHVGPFVSIGARSRVGDGCVIGTGSIIGEDCVVDAGSELLARVTLVTRVRLGKRVRIHPGAVIGADGFGLAMDAGHWIKVPQLGGVVIGDDCEIGANTCIDRGALEDTVLEEDVRVDNLVQIAHNCRIGAHSAIAGCTGIAGSAKIGRYCLLGGHVGVVGHLEICDKVVITGKSVVRNSIHEPGEYSSGTPLTDNRTWRKNAARFKQLDVLARRILAVGKEKE.

The active-site Proton acceptor is the His-238.

Belongs to the transferase hexapeptide repeat family. LpxD subfamily. Homotrimer.

It catalyses the reaction a UDP-3-O-[(3R)-3-hydroxyacyl]-alpha-D-glucosamine + a (3R)-hydroxyacyl-[ACP] = a UDP-2-N,3-O-bis[(3R)-3-hydroxyacyl]-alpha-D-glucosamine + holo-[ACP] + H(+). It participates in bacterial outer membrane biogenesis; LPS lipid A biosynthesis. Functionally, catalyzes the N-acylation of UDP-3-O-acylglucosamine using 3-hydroxyacyl-ACP as the acyl donor. Is involved in the biosynthesis of lipid A, a phosphorylated glycolipid that anchors the lipopolysaccharide to the outer membrane of the cell. The chain is UDP-3-O-acylglucosamine N-acyltransferase from Xanthomonas axonopodis pv. citri (strain 306).